The chain runs to 602 residues: MALSELEKKRQENIRRNQELLKKLDLDSISDSIKKEVDNKSFSSPSSQKRRKTTKKPVIKKEISEPSRRSRRIAGIKSELEDPKQAARIREEEELKQHRKQELERLKRTRLFGDFKLIDLITNKKGDMIFEKNVMDRKLSHIGLDSKVEEKKNEEDKEDEEEAINIDENNRVLQLVQSLGDKFSAGDFYEEIRNSQTNGNSKDKSLDAKRKEFDNLNIYPRFDPLDIKICHNRITSMFFHPSTTNRIVVGGDTTGNVGIWLVDEQNNDTKEEEEDDDDDEPSISILQLHGRNVSKIMTPTFSPEKIYTSSYDGSIRVLDLNKLTSTELLYLNEPGAREDIALGVSDINQCQDSSVIFMTTLDGEFYQHDTRTPFNTRQRHHLATKDLLRLHDKKIGGFAVNPNTNYQIATASLDRTLRIWDLRNVNKSVYSEFENQKSPHMYGNYNSRLSVSCVDWNQENRLVCNGYDDNICLFDYSGGSKLDNELPVITEWKSDFVPSTKSSEESELLPNNLTPFTKIKHNCQTGRWVSILKSHWQTNPADGVQKFIIANMNRGLDIYNQDGQILAHLNEQVGAVPAVCTLHPSQNWAVGGSASGKVYLFE.

The segment at lysine 35–glutamine 85 is disordered. Residues glutamine 48–valine 58 show a composition bias toward basic residues. The segment covering isoleucine 59 to arginine 68 has biased composition (basic and acidic residues). WD repeat units lie at residues isoleucine 229–lysine 270, arginine 291–leucine 328, leucine 390–tyrosine 430, asparagine 446–asparagine 484, glycine 526–leucine 569, and glutamate 571–glutamate 602.

The protein belongs to the WD repeat DDB2/WDR76 family.

In terms of biological role, DNA-binding protein that binds to both single- and double-stranded DNA. Binds preferentially to UV-damaged DNA. May be involved in DNA-metabolic processes. The chain is DNA damage-binding protein CMR1 from Candida albicans (strain SC5314 / ATCC MYA-2876) (Yeast).